The sequence spans 316 residues: tRNA dimethylallyltransferase (316 aa).

Residue 17–24 (GPTASGKT) coordinates ATP. 19 to 24 (TASGKT) contacts substrate. Interaction with substrate tRNA regions lie at residues 42–45 (DSAL), 166–170 (QRLSR), and 247–252 (RCVGYR).

This sequence belongs to the IPP transferase family. In terms of assembly, monomer. Requires Mg(2+) as cofactor.

The enzyme catalyses adenosine(37) in tRNA + dimethylallyl diphosphate = N(6)-dimethylallyladenosine(37) in tRNA + diphosphate. Functionally, catalyzes the transfer of a dimethylallyl group onto the adenine at position 37 in tRNAs that read codons beginning with uridine, leading to the formation of N6-(dimethylallyl)adenosine (i(6)A). This Salmonella arizonae (strain ATCC BAA-731 / CDC346-86 / RSK2980) protein is tRNA dimethylallyltransferase.